We begin with the raw amino-acid sequence, 428 residues long: Metal tolerance protein 10 (428 aa).

Topologically, residues 1–140 (MPLNSYIFFL…EMKKLAKSER (140 aa)) are cytoplasmic. The helical transmembrane segment at 141-161 (LAVHISNATNLVLFVAKVYAS) threads the bilayer. The Vacuolar portion of the chain corresponds to 162 to 167 (MESRSM). A helical membrane pass occupies residues 168–188 (AVIASTLDSLLDLLSGFILWF). Topologically, residues 189–209 (TANAMRKPNQFHYPIGKRRMQ) are cytoplasmic. Residues 210–230 (PVGIIVFASVMATLGLQVLLE) traverse the membrane as a helical segment. Residues 231-248 (SGRQLVAKSGIHMNSTEE) are Vacuolar-facing. Residues 249–269 (KWMIGIMVSVTIVKFLLMLYC) traverse the membrane as a helical segment. The Cytoplasmic portion of the chain corresponds to 270-287 (RGFQNEIVRAYAQDHLFD). The helical transmembrane segment at 288 to 308 (VVTNSIGLATAVLAVKFYWWI) threads the bilayer. Residues 309-311 (DPT) are Vacuolar-facing. The chain crosses the membrane as a helical span at residues 312–332 (GAILIALYTIATWARTVLENV). The Cytoplasmic portion of the chain corresponds to 333-428 (HSLIGRSAPP…FTHRPEHKCN (96 aa)).

This sequence belongs to the cation diffusion facilitator (CDF) transporter (TC 2.A.4) family. SLC30A subfamily.

Its subcellular location is the vacuole membrane. Functionally, involved in sequestration of excess metal in the cytoplasm into vacuoles to maintain metal homeostasis. This chain is Metal tolerance protein 10 (MTP10), found in Arabidopsis thaliana (Mouse-ear cress).